A 274-amino-acid chain; its full sequence is Rhamnulose-1-phosphate aldolase (274 aa).

E117 is a catalytic residue. 3 residues coordinate Zn(2+): H141, H143, and H212.

The protein belongs to the aldolase class II family. RhaD subfamily. In terms of assembly, homotetramer. Requires Zn(2+) as cofactor.

Its subcellular location is the cytoplasm. The enzyme catalyses L-rhamnulose 1-phosphate = (S)-lactaldehyde + dihydroxyacetone phosphate. Its pathway is carbohydrate degradation; L-rhamnose degradation; glycerone phosphate from L-rhamnose: step 3/3. Its function is as follows. Catalyzes the reversible cleavage of L-rhamnulose-1-phosphate to dihydroxyacetone phosphate (DHAP) and L-lactaldehyde. This chain is Rhamnulose-1-phosphate aldolase, found in Escherichia fergusonii (strain ATCC 35469 / DSM 13698 / CCUG 18766 / IAM 14443 / JCM 21226 / LMG 7866 / NBRC 102419 / NCTC 12128 / CDC 0568-73).